The chain runs to 295 residues: uncharacterized protein (295 aa).

This is an uncharacterized protein from Xanthobacter autotrophicus.